Consider the following 436-residue polypeptide: UPF0597 protein YhaM (436 aa).

Belongs to the UPF0597 family.

This chain is UPF0597 protein YhaM, found in Escherichia coli O6:H1 (strain CFT073 / ATCC 700928 / UPEC).